The primary structure comprises 332 residues: Apoptosis-enhancing nuclease (332 aa).

Residues methionine 1–proline 102 form a disordered region. Positions alanine 20 to alanine 36 are enriched in basic residues. Residues arginine 21–arginine 29 carry the Nucleolar localization signal motif. Positions glutamine 63 to asparagine 73 are enriched in polar residues. The 157-residue stretch at tyrosine 105–tyrosine 261 folds into the Exonuclease domain. A Nuclear localization signal motif is present at residues arginine 160–lysine 183. The segment at valine 272–proline 332 is disordered. A compositionally biased stretch (basic and acidic residues) spans glycine 310–glycine 321.

The protein localises to the nucleus. It localises to the nucleolus. Its function is as follows. Exonuclease with activity against single- and double-stranded DNA and RNA. Mediates p53-induced apoptosis. When induced by p53 following DNA damage, digests double-stranded DNA to form single-stranded DNA and amplifies DNA damage signals, leading to enhancement of apoptosis. The sequence is that of Apoptosis-enhancing nuclease from Rattus norvegicus (Rat).